The primary structure comprises 282 residues: Transcription factor MYB20 (282 aa).

2 HTH myb-type domains span residues 9 to 61 and 62 to 116; these read KVGL…TNYL and RPDL…KKKL. 2 consecutive DNA-binding regions (H-T-H motif) follow at residues 37–61 and 89–112; these read WRAV…TNYL and WSKI…NTHI.

As to expression, expressed in chalaza of mature seeds, cotyledons, rosette leaves, cauline leaves, veins of stems, mature siliques, sepals and styles. Expressed at low levels in roots.

It localises to the nucleus. Its function is as follows. Transcription factor that acts as a positive regulator of abscisic acid (ABA) signaling in response to salt stress. Acts as a negative regulator ABI1, ABI2 and PP2CA, which are protein phosphatases 2C acting as negative regulator of ABA signaling. Binds to the DNA specific sequence and core element 5'-ACGT-3' found in the promoters of ABI1 and PP2CA to negatively regulate their expression during ABA-dependent salt stress response. The polypeptide is Transcription factor MYB20 (Arabidopsis thaliana (Mouse-ear cress)).